Reading from the N-terminus, the 118-residue chain is Late cornified envelope protein 1E (118 aa).

The segment covering M1 to C10 has biased composition (low complexity). Disordered stretches follow at residues M1 to K23 and R84 to C118. Positions Q11–K23 are enriched in pro residues. The span at S92–S103 shows a compositional bias: low complexity. Gly residues predominate over residues S104–C118.

The protein belongs to the LCE family. In terms of assembly, interacts with CYSRT1. Skin-specific. Expression was readily detected in adult trunk skin, adult arm skin, fetal skin, penal skin, vulva, esophagus and tongue. Not expressed in the cervix, rectum, lung, colon, or placenta.

Precursors of the cornified envelope of the stratum corneum. This is Late cornified envelope protein 1E (LCE1E) from Homo sapiens (Human).